We begin with the raw amino-acid sequence, 378 residues long: Flagellar P-ring protein 2 (378 aa).

The signal sequence occupies residues 1–33; it reads MHEVSDKTNAIHPLQRVSRALFALGLLCFAAMA.

The protein belongs to the FlgI family. In terms of assembly, the basal body constitutes a major portion of the flagellar organelle and consists of four rings (L,P,S, and M) mounted on a central rod.

The protein localises to the periplasm. The protein resides in the bacterial flagellum basal body. In terms of biological role, assembles around the rod to form the L-ring and probably protects the motor/basal body from shearing forces during rotation. This Hahella chejuensis (strain KCTC 2396) protein is Flagellar P-ring protein 2.